A 575-amino-acid chain; its full sequence is Sodium/hydrogen exchanger 8 (575 aa).

The next 11 helical transmembrane spans lie at 54–74 (MTIF…HLLI), 78–98 (LHFL…GAVI), 117–137 (PNMF…YSLH), 150–170 (LFAV…IYFL), 185–205 (FAFG…IFNA), 255–275 (LGYF…TGLI), 305–325 (GLAE…GIVM), 348–368 (VAFL…FSFP), 373–393 (ISFV…NIFP), 411–431 (MFIM…SLHL), and 445–465 (TTII…MPLI). T504 bears the Phosphothreonine mark. Phosphoserine occurs at positions 565 and 567.

It belongs to the monovalent cation:proton antiporter 1 (CPA1) transporter (TC 2.A.36) family. Intestine and kidneys.

Its subcellular location is the golgi apparatus membrane. It localises to the golgi apparatus. It is found in the trans-Golgi network membrane. The protein localises to the endosome. The protein resides in the multivesicular body membrane. Its subcellular location is the apical cell membrane. It localises to the cytoplasmic vesicle. It is found in the secretory vesicle. The protein localises to the acrosome. It carries out the reaction Na(+)(in) + H(+)(out) = Na(+)(out) + H(+)(in). With respect to regulation, expression and activity are regulated by acid media by increasing the rate of trafficking to the apical membrane. Inhibited by HOE694 and S3226. Functionally, na(+)/H(+) antiporter. Mediates the electoneutral exchange of intracellular H(+) ions for extracellular Na(+) in 1:1 stoichiometry. Acts as an Na(+)/H(+) exchanger in the trans-Golgi. Contributes to the regulation of pH regulation of Golgi apparatus, and consequently, in protein trafficking and endosomal morphology. In germ cells, plays a crucial role in acrosome biogenesis and sperm development, probably by playing a role in the fusion of the Golgi-derived vesicles that form the acrosomal cap. Can also be active at the cell surface of specialized cells. In the small intestine, at the cell membrane, plays a major physiological role in transepithelial absorption of Na(+) and regulates intracellular pH homeostasis of intestinal epithelial cells. Acts as an important regulator of mucosal integrity in the intestine and in the stomach, could mediate the pH fluctuation necessary for mucin exocytosis or assist membrane trafficking of other proteins. Plays a role in photoreceptor survival and in the maintenance of intracellular pH homeostasis in retinal pigment epithelium (RPE cells). The protein is Sodium/hydrogen exchanger 8 (Slc9a8) of Rattus norvegicus (Rat).